Consider the following 144-residue polypeptide: Putative pre-16S rRNA nuclease (144 aa).

The protein belongs to the YqgF nuclease family.

Its subcellular location is the cytoplasm. Could be a nuclease involved in processing of the 5'-end of pre-16S rRNA. The chain is Putative pre-16S rRNA nuclease from Ralstonia nicotianae (strain ATCC BAA-1114 / GMI1000) (Ralstonia solanacearum).